Here is a 563-residue protein sequence, read N- to C-terminus: Arginine--tRNA ligase (563 aa).

The short motif at 121–131 is the 'HIGH' region element; sequence PNIAKPFSIGH.

This sequence belongs to the class-I aminoacyl-tRNA synthetase family. In terms of assembly, monomer.

The protein resides in the cytoplasm. The catalysed reaction is tRNA(Arg) + L-arginine + ATP = L-arginyl-tRNA(Arg) + AMP + diphosphate. This is Arginine--tRNA ligase from Streptococcus pyogenes serotype M1.